Consider the following 747-residue polypeptide: Probable copper-transporting ATPase PacS (747 aa).

At 1–101 (MVNQQTLTLR…RQLAQRVWVS (101 aa)) the chain is on the cytoplasmic side. The HMA domain maps to 3–69 (NQQTLTLRGM…AIEAAGYHAF (67 aa)). Positions 14 and 17 each coordinate a metal cation. The helical transmembrane segment at 102-122 (GLIASLLVIGSLPMMLGISIP) threads the bilayer. The Extracellular portion of the chain corresponds to 123-132 (GIPMWLHHPG). A helical membrane pass occupies residues 133–151 (LQLGLTLPVLWAGRSFFIN). Residues 152–158 (AWKAFRQ) lie on the Cytoplasmic side of the membrane. A helical transmembrane segment spans residues 159–179 (NTATMDTLVAVGTGAAFLYSL). The Extracellular portion of the chain corresponds to 180–199 (AVTLFPQWLTRQGLPPDVYY). Residues 200–220 (EAIAVIIALLLLGRSLEERAK) form a helical membrane-spanning segment. Over 221–348 (GQTSAAIRQL…KAPIQRLADQ (128 aa)) the chain is Cytoplasmic. The chain crosses the membrane as a helical span at residues 349 to 371 (VTGWFVPAVIAIAILTFVLWFNW). At 372–378 (IGNVTLA) the chain is on the extracellular side. A helical transmembrane segment spans residues 379-396 (LITAVGVLIIACPCALGL). The Cytoplasmic portion of the chain corresponds to 397–688 (ATPTSIMVGT…QLSRATMTNI (292 aa)). Catalysis depends on D434, which acts as the 4-aspartylphosphate intermediate. The Mg(2+) site is built by D634 and D638. A helical membrane pass occupies residues 689-708 (RQNLFFAFIYNVAGIPIAAG). At 709 to 720 (ILYPLLGWLLSP) the chain is on the extracellular side. The chain crosses the membrane as a helical span at residues 721-739 (MLAGAAMAFSSVSVVTNAL). Residues 740–747 (RLRQFQPR) are Cytoplasmic-facing.

The protein belongs to the cation transport ATPase (P-type) (TC 3.A.3) family. Type IB subfamily.

It is found in the cell membrane. It carries out the reaction Cu(+)(in) + ATP + H2O = Cu(+)(out) + ADP + phosphate + H(+). In terms of biological role, may play a role in the osmotic adaptation. This Synechococcus elongatus (strain ATCC 33912 / PCC 7942 / FACHB-805) (Anacystis nidulans R2) protein is Probable copper-transporting ATPase PacS (pacS).